The chain runs to 63 residues: Cecropin-C (63 aa).

The first 23 residues, 1 to 23 (MNFNKIFVFVALILAISLGQSEA), serve as a signal peptide directing secretion. Residue Arg62 is modified to Arginine amide.

This sequence belongs to the cecropin family.

It is found in the secreted. Its function is as follows. Cecropins have lytic and antibacterial activity against several Gram-positive and Gram-negative bacteria. This chain is Cecropin-C (CecC), found in Drosophila orena (Fruit fly).